A 276-amino-acid chain; its full sequence is Large ribosomal subunit protein uL2 (276 aa).

The tract at residues 221–276 is disordered; the sequence is RGSAMNPNDHPHGGGEGRAPIGRKSPMTPWGKKARGVKTRDRKKASNALIIRRRKK. Positions 252 to 276 are enriched in basic residues; it reads KKARGVKTRDRKKASNALIIRRRKK.

It belongs to the universal ribosomal protein uL2 family. Part of the 50S ribosomal subunit. Forms a bridge to the 30S subunit in the 70S ribosome.

Its function is as follows. One of the primary rRNA binding proteins. Required for association of the 30S and 50S subunits to form the 70S ribosome, for tRNA binding and peptide bond formation. It has been suggested to have peptidyltransferase activity; this is somewhat controversial. Makes several contacts with the 16S rRNA in the 70S ribosome. In Aster yellows witches'-broom phytoplasma (strain AYWB), this protein is Large ribosomal subunit protein uL2.